Reading from the N-terminus, the 1049-residue chain is Dyslexia-associated protein KIAA0319-like protein (1049 aa).

Over 1–29 (MEKRLGVKPNPASWILSGYYWQTSAKWLR) the chain is Cytoplasmic. A helical transmembrane segment spans residues 30–50 (TLYLFYTCFCFSVLWLSTDAS). One can recognise an MANSC domain in the interval 49-127 (ASESRCQQGK…AFRTHSSNSM (79 aa)). At 51–932 (ESRCQQGKTQ…ESNCEWSVLY (882 aa)) the chain is on the extracellular side. The tract at residues 234–277 (TTDLTAELPGGPKNVSAQPEIPEGLATTPSTQQVKSSEKTQIAV) is disordered. N-linked (GlcNAc...) asparagine glycans are attached at residues Asn-247, Asn-395, and Asn-487. PKD domains lie at 310–401 (VVSA…VKPE), 409–498 (IAIV…VNKA), 504–594 (VANA…VQPE), 600–688 (QADA…VKEE), and 694–785 (IAKI…VKPD). Residues 933–953 (VIIATFVIVVALGILSWTVIC) form a helical membrane-spanning segment. The Cytoplasmic segment spans residues 954 to 1049 (CCKRQKGKPK…KARSPREEIL (96 aa)). Residue Thr-974 is modified to Phosphothreonine. Ser-978, Ser-1009, and Ser-1031 each carry phosphoserine. The disordered stretch occupies residues 1022-1049 (GKLLHGQNGSVPNGQTPLKARSPREEIL). Residues 1028–1037 (QNGSVPNGQT) show a composition bias toward polar residues. The residue at position 1037 (Thr-1037) is a Phosphothreonine.

In terms of assembly, interacts with RTN4R. In terms of processing, N-glycosylated.

It is found in the cytoplasmic granule membrane. The protein localises to the golgi apparatus membrane. Its subcellular location is the golgi apparatus. It localises to the trans-Golgi network membrane. The protein resides in the cell membrane. Functionally, possible role in axon guidance through interaction with RTN4R. The sequence is that of Dyslexia-associated protein KIAA0319-like protein from Pongo abelii (Sumatran orangutan).